The following is a 451-amino-acid chain: Tubulin gamma-1 chain (451 aa).

Ser131 bears the Phosphoserine; by BRSK1 mark. 142–148 (AGGTGSG) serves as a coordination point for GTP.

Belongs to the tubulin family. Component of the gamma-tubulin ring complex (gTuRC) consisting of TUBGCP2, TUBGCP3, TUBGCP4, TUBGCP5 and TUBGCP6 and gamma-tubulin TUBG1 or TUBG2. TUBGCP2, TUBGCP3, TUBGCP4, TUBGCP5 and TUBGCP6 assemble in a 5:5:2:1:1 stoichiometry; each is associated with a gamma-tubulin, thereby arranging 14 gamma-tubulins in a helical manner. Gamma-tubulin at the first position is blocked by TUBGCP3 at the last position, allowing 13 protafilaments to grow into a microtubule. The gTuRC (via TUBGCP3 and TUBGCP6) interacts with ACTB and MZT1; the interactions form a luminal bridge that stabilizes the initial structure during complex assembly. The gTuRC (via TUBGCP2) interacts with MZT2A/MZT2B and CDK5RAP2 (via CM1 motif); the interactions play a role in gTuRC activation. Interacts with alpha-beta tubulin heterodimers; the interaction allows microtubules to nucleate from the gTuRC. Interacts with B9D2. Interacts with CDK5RAP2; the interaction is leading to centrosomal localization of TUBG1 and CDK5RAP2. Interacts with CIMAP3. Interacts with SAS6 and NUP62 at the centrosome. Interacts with EML3 (phosphorylated at 'Thr-881') and HAUS8. Interacts with DNM2; this interaction may participate in centrosome cohesion. Interacts with CCDC66. Post-translationally, phosphorylation at Ser-131 by BRSK1 regulates centrosome duplication, possibly by mediating relocation of gamma-tubulin and its associated proteins from the cytoplasm to the centrosome.

It is found in the cytoplasm. It localises to the cytoskeleton. Its subcellular location is the microtubule organizing center. The protein resides in the centrosome. The protein localises to the spindle. Tubulin is the major constituent of microtubules, protein filaments consisting of alpha- and beta-tubulin heterodimers. Gamma-tubulin is a key component of the gamma-tubulin ring complex (gTuRC) which mediates microtubule nucleation. The gTuRC regulates the minus-end nucleation of alpha-beta tubulin heterodimers that grow into microtubule protafilaments, a critical step in centrosome duplication and spindle formation. The protein is Tubulin gamma-1 chain of Canis lupus familiaris (Dog).